A 232-amino-acid chain; its full sequence is Ubiquinone biosynthesis O-methyltransferase (232 aa).

Positions 36, 55, 76, and 120 each coordinate S-adenosyl-L-methionine.

Belongs to the methyltransferase superfamily. UbiG/COQ3 family.

It catalyses the reaction a 3-demethylubiquinol + S-adenosyl-L-methionine = a ubiquinol + S-adenosyl-L-homocysteine + H(+). It carries out the reaction a 3-(all-trans-polyprenyl)benzene-1,2-diol + S-adenosyl-L-methionine = a 2-methoxy-6-(all-trans-polyprenyl)phenol + S-adenosyl-L-homocysteine + H(+). It functions in the pathway cofactor biosynthesis; ubiquinone biosynthesis. Its function is as follows. O-methyltransferase that catalyzes the 2 O-methylation steps in the ubiquinone biosynthetic pathway. The chain is Ubiquinone biosynthesis O-methyltransferase from Pseudomonas savastanoi pv. phaseolicola (strain 1448A / Race 6) (Pseudomonas syringae pv. phaseolicola (strain 1448A / Race 6)).